The chain runs to 570 residues: Probable D-xylulose kinase A (570 aa).

His-95, Arg-166, Asp-282, and Asn-283 together coordinate substrate. Residues Trp-364, 469 to 470 (GG), and Asn-473 each bind ATP.

Belongs to the FGGY kinase family.

The protein resides in the cytoplasm. It carries out the reaction D-xylulose + ATP = D-xylulose 5-phosphate + ADP + H(+). Highly specific D-xylulose kinase which participates in the catabolism of xylose. Xylose is a major component of hemicelluloses such as xylan. Most fungi utilize D-xylose via three enzymatic reactions, xylose reductase (XR), xylitol dehydrogenase (XDH), and xylulokinase, to form xylulose 5-phosphate, which enters pentose phosphate pathway. This chain is Probable D-xylulose kinase A (xkiA), found in Aspergillus niger (strain ATCC MYA-4892 / CBS 513.88 / FGSC A1513).